The sequence spans 384 residues: MDRQCAVASLTAFQFQIDRQCSQTRGRACSFHTPHGIVETPRFMPVGTLATVKTVTPAQLRDTGAQMVLSNTYHLHLQPGEEIVAKAGGLHRFMNWSGPMLTDSGGFQVFSLSELRKIEERGVTFRSPRDGAVIEFTPERSIRIQNALGADVIMAFDECPPYPAERKDVEAAVARTYRWLERCINAHERPQDQALFGIVQGGVYLDLRQQAARDLVQLDLPGYAIGGVSVGEPSEEIHRIVEATAPLLPAHKPRYLMGVGTYREMVQAIAAGIDLFDCVIPTRLARHGAALVKGDRWNLKNAQFREDFQPLDEDCNCYCCQNFSRAYLNHLIRSREILGYTLLSIHNITELVRFTTRIREAILSDRFVEEFGHWLQPSAVPVSP.

D103 acts as the Proton acceptor in catalysis. Substrate contacts are provided by residues 103-107 (DSGGF), D157, Q200, and G227. The interval 258-264 (GVGTYRE) is RNA binding. D277 serves as the catalytic Nucleophile. Residues 282 to 286 (TRLAR) form an RNA binding; important for wobble base 34 recognition region. The Zn(2+) site is built by C315, C317, C320, and H346.

Belongs to the queuine tRNA-ribosyltransferase family. Homodimer. Within each dimer, one monomer is responsible for RNA recognition and catalysis, while the other monomer binds to the replacement base PreQ1. Zn(2+) is required as a cofactor.

The enzyme catalyses 7-aminomethyl-7-carbaguanine + guanosine(34) in tRNA = 7-aminomethyl-7-carbaguanosine(34) in tRNA + guanine. It functions in the pathway tRNA modification; tRNA-queuosine biosynthesis. In terms of biological role, catalyzes the base-exchange of a guanine (G) residue with the queuine precursor 7-aminomethyl-7-deazaguanine (PreQ1) at position 34 (anticodon wobble position) in tRNAs with GU(N) anticodons (tRNA-Asp, -Asn, -His and -Tyr). Catalysis occurs through a double-displacement mechanism. The nucleophile active site attacks the C1' of nucleotide 34 to detach the guanine base from the RNA, forming a covalent enzyme-RNA intermediate. The proton acceptor active site deprotonates the incoming PreQ1, allowing a nucleophilic attack on the C1' of the ribose to form the product. After dissociation, two additional enzymatic reactions on the tRNA convert PreQ1 to queuine (Q), resulting in the hypermodified nucleoside queuosine (7-(((4,5-cis-dihydroxy-2-cyclopenten-1-yl)amino)methyl)-7-deazaguanosine). This is Queuine tRNA-ribosyltransferase from Synechococcus elongatus (strain ATCC 33912 / PCC 7942 / FACHB-805) (Anacystis nidulans R2).